Consider the following 326-residue polypeptide: MSILINNGNDYQLNSSETFNSLKSSPSSTSSLSSISTSSSSSCHKRSKAVDLNRNTSNSQNSSISTAPTTATAANTTPRKTSITIPSKLPSSWIPLRNGNIDYSRYYNTNQEEDNQEQQLQDGEPLSAPTTNNGTTKTATANANIIQDSFETIPCFSSTTNTTITSSRSNPTNSTPTSNDPSFPKQMINWNQFLQEEKDMNDNSSTINDDDKTFYMEQLNLNVGQTPNNNNNNNHGVSETENDLLPGTSKSLIAKYHYQLNYGDENENETNDVREYEYGGGESRKRKSSTTSDDRRPRRGGGGGGSRTSQVFRNTLNKFTFKPKIK.

5 disordered regions span residues 19 to 91 (FNSL…KLPS), 112 to 137 (EEDN…GTTK), 161 to 184 (NTTI…PSFP), 222 to 245 (NVGQ…NDLL), and 276 to 326 (YEYG…PKIK). Composition is skewed to low complexity over residues 21-42 (SLKS…SSSS), 53-78 (NRNT…NTTP), and 117-137 (EQQL…GTTK).

In terms of biological role, virulence factor involved in pathogen-host interaction. Modulates host pro-inflammatory cytokine interleukin-1 beta (IL1B) expression. The protein is Virulence factor CaO19.6688 of Candida albicans (strain SC5314 / ATCC MYA-2876) (Yeast).